The following is a 240-amino-acid chain: Probable septum site-determining protein MinC (240 aa).

Belongs to the MinC family. As to quaternary structure, interacts with MinD and FtsZ.

Cell division inhibitor that blocks the formation of polar Z ring septums. Rapidly oscillates between the poles of the cell to destabilize FtsZ filaments that have formed before they mature into polar Z rings. Prevents FtsZ polymerization. The chain is Probable septum site-determining protein MinC from Acinetobacter baylyi (strain ATCC 33305 / BD413 / ADP1).